We begin with the raw amino-acid sequence, 238 residues long: ATP-dependent dethiobiotin synthetase BioD (238 aa).

12-17 (EVGKTV) contributes to the ATP binding site. Position 16 (threonine 16) interacts with Mg(2+). Residue lysine 37 is part of the active site. Substrate is bound at residue threonine 41. ATP-binding positions include aspartate 50, 109 to 112 (EGAG), 170 to 171 (GS), and 200 to 202 (PAG). Mg(2+) contacts are provided by aspartate 50 and glutamate 109.

Belongs to the dethiobiotin synthetase family. Homodimer. Requires Mg(2+) as cofactor.

The protein resides in the cytoplasm. It catalyses the reaction (7R,8S)-7,8-diammoniononanoate + CO2 + ATP = (4R,5S)-dethiobiotin + ADP + phosphate + 3 H(+). It functions in the pathway cofactor biosynthesis; biotin biosynthesis; biotin from 7,8-diaminononanoate: step 1/2. In terms of biological role, catalyzes a mechanistically unusual reaction, the ATP-dependent insertion of CO2 between the N7 and N8 nitrogen atoms of 7,8-diaminopelargonic acid (DAPA, also called 7,8-diammoniononanoate) to form a ureido ring. In Streptomyces avermitilis (strain ATCC 31267 / DSM 46492 / JCM 5070 / NBRC 14893 / NCIMB 12804 / NRRL 8165 / MA-4680), this protein is ATP-dependent dethiobiotin synthetase BioD.